The chain runs to 196 residues: MLQNPIHLRLERLESWQHVTFMACLCERMYPNYAMFCKQTEFGDGQIYRRILDLIWETLTVKDAKVNFDSQLEKFEEAIPAADDYDLYGVYPAIDACVALSELMHSRLSGETLEHAIEVSKTSITTVAMLEMTQAGREMTDEELKTNPAVEQEWDIQWEIFRLLADCEERDIELIKGLRADLREAGESNIGINFQQ.

To H.influenzae HI_0431.

This is an uncharacterized protein from Salmonella typhi.